Consider the following 87-residue polypeptide: Translation initiation factor IF-1 2 (87 aa).

The S1-like domain maps to 1–72 (MAKEELLEMQ…SKGRITFRHI (72 aa)).

It belongs to the IF-1 family. Component of the 30S ribosomal translation pre-initiation complex which assembles on the 30S ribosome in the order IF-2 and IF-3, IF-1 and N-formylmethionyl-tRNA(fMet); mRNA recruitment can occur at any time during PIC assembly.

It is found in the cytoplasm. In terms of biological role, one of the essential components for the initiation of protein synthesis. Stabilizes the binding of IF-2 and IF-3 on the 30S subunit to which N-formylmethionyl-tRNA(fMet) subsequently binds. Helps modulate mRNA selection, yielding the 30S pre-initiation complex (PIC). Upon addition of the 50S ribosomal subunit IF-1, IF-2 and IF-3 are released leaving the mature 70S translation initiation complex. This chain is Translation initiation factor IF-1 2, found in Dechloromonas aromatica (strain RCB).